We begin with the raw amino-acid sequence, 206 residues long: Glycerol-3-phosphate acyltransferase (206 aa).

The next 5 membrane-spanning stretches (helical) occupy residues 3-23 (LSLI…VIIG), 47-67 (VLGP…GTLA), 79-99 (HSLV…SIFL), 119-139 (PLFF…TSMV), and 152-172 (ILSF…VLIF).

Belongs to the PlsY family. As to quaternary structure, probably interacts with PlsX.

The protein localises to the cell membrane. It catalyses the reaction an acyl phosphate + sn-glycerol 3-phosphate = a 1-acyl-sn-glycero-3-phosphate + phosphate. The protein operates within lipid metabolism; phospholipid metabolism. Catalyzes the transfer of an acyl group from acyl-phosphate (acyl-PO(4)) to glycerol-3-phosphate (G3P) to form lysophosphatidic acid (LPA). This enzyme utilizes acyl-phosphate as fatty acyl donor, but not acyl-CoA or acyl-ACP. This chain is Glycerol-3-phosphate acyltransferase, found in Latilactobacillus sakei subsp. sakei (strain 23K) (Lactobacillus sakei subsp. sakei).